The primary structure comprises 220 residues: Large ribosomal subunit protein uL16 (220 aa).

It belongs to the universal ribosomal protein uL16 family. In terms of assembly, component of the small ribosomal subunit. Mature ribosomes consist of a small (40S) and a large (60S) subunit. The 40S subunit contains about 33 different proteins and 1 molecule of RNA (18S). The 60S subunit contains about 49 different proteins and 3 molecules of RNA (25S, 5.8S and 5S).

The polypeptide is Large ribosomal subunit protein uL16 (RPL10) (Zea mays (Maize)).